The chain runs to 207 residues: Guanylate kinase (207 aa).

Residues 10–187 (GFFIVLSAAS…AVERLQVIYQ (178 aa)) enclose the Guanylate kinase-like domain. Residue 17–24 (AASGTGKT) coordinates ATP.

The protein belongs to the guanylate kinase family.

The protein resides in the cytoplasm. The enzyme catalyses GMP + ATP = GDP + ADP. Its function is as follows. Essential for recycling GMP and indirectly, cGMP. The chain is Guanylate kinase from Syntrophus aciditrophicus (strain SB).